We begin with the raw amino-acid sequence, 277 residues long: Formamidopyrimidine-DNA glycosylase (277 aa).

The active-site Schiff-base intermediate with DNA is proline 2. The active-site Proton donor is the glutamate 3. Lysine 58 (proton donor; for beta-elimination activity) is an active-site residue. 3 residues coordinate DNA: histidine 95, arginine 113, and arginine 158. The FPG-type zinc finger occupies 243-277 (GVYDRANQPCLRCGGVVRQIRQAGRSTYYCTGCQH). Arginine 267 serves as the catalytic Proton donor; for delta-elimination activity.

Belongs to the FPG family. Monomer. Zn(2+) is required as a cofactor.

It catalyses the reaction Hydrolysis of DNA containing ring-opened 7-methylguanine residues, releasing 2,6-diamino-4-hydroxy-5-(N-methyl)formamidopyrimidine.. The enzyme catalyses 2'-deoxyribonucleotide-(2'-deoxyribose 5'-phosphate)-2'-deoxyribonucleotide-DNA = a 3'-end 2'-deoxyribonucleotide-(2,3-dehydro-2,3-deoxyribose 5'-phosphate)-DNA + a 5'-end 5'-phospho-2'-deoxyribonucleoside-DNA + H(+). In terms of biological role, involved in base excision repair of DNA damaged by oxidation or by mutagenic agents. Acts as a DNA glycosylase that recognizes and removes damaged bases. Has a preference for oxidized purines, such as 7,8-dihydro-8-oxoguanine (8-oxoG). Has AP (apurinic/apyrimidinic) lyase activity and introduces nicks in the DNA strand. Cleaves the DNA backbone by beta-delta elimination to generate a single-strand break at the site of the removed base with both 3'- and 5'-phosphates. This chain is Formamidopyrimidine-DNA glycosylase, found in Dechloromonas aromatica (strain RCB).